Here is a 384-residue protein sequence, read N- to C-terminus: Glycerol 3-phosphate oxidase (384 aa).

The N-terminal stretch at 1 to 17 (MQTIDVLIVGGGVIGTS) is a signal peptide. I14 contacts FAD. A lipid anchor (N-palmitoyl cysteine) is attached at C18. C18 carries S-diacylglycerol cysteine lipidation. FAD-binding positions include E33, 42 to 43 (TS), and 47 to 49 (SGV). 2 residues coordinate sn-glycerol 3-phosphate: S47 and H51. Residue H51 is the Proton acceptor of the active site. V177 contacts FAD. 2 residues coordinate sn-glycerol 3-phosphate: K258 and R320. Position 346–347 (346–347 (MK)) interacts with FAD. A sn-glycerol 3-phosphate-binding site is contributed by S348. T352 is an FAD binding site.

Monomer. FAD is required as a cofactor.

The protein resides in the cytoplasm. Its subcellular location is the cell membrane. The catalysed reaction is sn-glycerol 3-phosphate + O2 = dihydroxyacetone phosphate + H2O2. Its pathway is polyol metabolism; glycerol degradation via glycerol kinase pathway; glycerone phosphate from sn-glycerol 3-phosphate (aerobic route): step 1/1. Catalyzes the oxidation of glycerol 3-phosphate to dihydroxyacetone phosphate (DHAP), with a reduction of O2 to H2O2. The formation of hydrogen peroxide by this enzyme is crucial for cytotoxic effects on host cells. Does not show any dehydrogenase activity with NAD(+). The sequence is that of Glycerol 3-phosphate oxidase from Mycoplasma genitalium (strain ATCC 33530 / DSM 19775 / NCTC 10195 / G37) (Mycoplasmoides genitalium).